The chain runs to 238 residues: Ribonuclease PH (238 aa).

Phosphate-binding positions include Arg-86 and 124-126; that span reads GTR.

The protein belongs to the RNase PH family. In terms of assembly, homohexameric ring arranged as a trimer of dimers.

The enzyme catalyses tRNA(n+1) + phosphate = tRNA(n) + a ribonucleoside 5'-diphosphate. Functionally, phosphorolytic 3'-5' exoribonuclease that plays an important role in tRNA 3'-end maturation. Removes nucleotide residues following the 3'-CCA terminus of tRNAs; can also add nucleotides to the ends of RNA molecules by using nucleoside diphosphates as substrates, but this may not be physiologically important. Probably plays a role in initiation of 16S rRNA degradation (leading to ribosome degradation) during starvation. This Aliivibrio fischeri (strain ATCC 700601 / ES114) (Vibrio fischeri) protein is Ribonuclease PH.